Here is a 278-residue protein sequence, read N- to C-terminus: 4-hydroxy-tetrahydrodipicolinate reductase (278 aa).

NAD(+)-binding positions include 13–18 (GAAGKM) and 111–113 (GTT). Residue His-167 is the Proton donor/acceptor of the active site. His-168 is a binding site for (S)-2,3,4,5-tetrahydrodipicolinate. Lys-171 functions as the Proton donor in the catalytic mechanism. 177–178 (GT) is a binding site for (S)-2,3,4,5-tetrahydrodipicolinate.

It belongs to the DapB family.

The protein resides in the cytoplasm. The catalysed reaction is (S)-2,3,4,5-tetrahydrodipicolinate + NAD(+) + H2O = (2S,4S)-4-hydroxy-2,3,4,5-tetrahydrodipicolinate + NADH + H(+). The enzyme catalyses (S)-2,3,4,5-tetrahydrodipicolinate + NADP(+) + H2O = (2S,4S)-4-hydroxy-2,3,4,5-tetrahydrodipicolinate + NADPH + H(+). Its pathway is amino-acid biosynthesis; L-lysine biosynthesis via DAP pathway; (S)-tetrahydrodipicolinate from L-aspartate: step 4/4. Functionally, catalyzes the conversion of 4-hydroxy-tetrahydrodipicolinate (HTPA) to tetrahydrodipicolinate. This Nostoc sp. (strain PCC 7120 / SAG 25.82 / UTEX 2576) protein is 4-hydroxy-tetrahydrodipicolinate reductase.